The primary structure comprises 266 residues: uncharacterized protein (266 aa).

Residues 112 to 261 form the TIR domain; the sequence is LEKKIFISHS…KKWERIKAKF (150 aa). Glu-192 is an active-site residue.

The enzyme catalyses NAD(+) + H2O = ADP-D-ribose + nicotinamide + H(+). This is an uncharacterized protein from Bacillus subtilis (strain 168).